The following is a 754-amino-acid chain: 5-methyltetrahydropteroyltriglutamate--homocysteine methyltransferase (754 aa).

Residues 17–20 and K117 contribute to the 5-methyltetrahydropteroyltri-L-glutamate site; that span reads RELK. L-homocysteine-binding positions include 431 to 433 and E484; that span reads IGS. Residues 431 to 433 and E484 each bind L-methionine; that span reads IGS. 5-methyltetrahydropteroyltri-L-glutamate is bound by residues 515–516 and W561; that span reads RC. Position 599 (D599) interacts with L-homocysteine. L-methionine is bound at residue D599. E605 is a 5-methyltetrahydropteroyltri-L-glutamate binding site. 3 residues coordinate Zn(2+): H641, C643, and E665. The active-site Proton donor is the H694. Zn(2+) is bound at residue C726.

It belongs to the vitamin-B12 independent methionine synthase family. Requires Zn(2+) as cofactor.

It carries out the reaction 5-methyltetrahydropteroyltri-L-glutamate + L-homocysteine = tetrahydropteroyltri-L-glutamate + L-methionine. It functions in the pathway amino-acid biosynthesis; L-methionine biosynthesis via de novo pathway; L-methionine from L-homocysteine (MetE route): step 1/1. Its function is as follows. Catalyzes the transfer of a methyl group from 5-methyltetrahydrofolate to homocysteine resulting in methionine formation. In Salmonella typhi, this protein is 5-methyltetrahydropteroyltriglutamate--homocysteine methyltransferase.